Reading from the N-terminus, the 157-residue chain is Probable succinate transporter subunit YjjB (157 aa).

The next 4 membrane-spanning stretches (helical) occupy residues 8 to 28 (FALA…AMVF), 50 to 70 (MILM…SMLV), 87 to 107 (VFTV…TAMI), and 129 to 149 (FLTA…PGLW).

The protein belongs to the ThrE exporter (TC 2.A.79) family. As to quaternary structure, the transporter is composed of YjjB and YjjP.

The protein resides in the cell inner membrane. In terms of biological role, involved in succinate export with YjjP. Both proteins are required for export. This chain is Probable succinate transporter subunit YjjB, found in Escherichia coli (strain SE11).